The chain runs to 442 residues: Signal recognition particle 54 kDa protein (442 aa).

GTP contacts are provided by residues Gly106–Thr113, Asp186–Arg190, and Thr244–Asp247.

Belongs to the GTP-binding SRP family. SRP54 subfamily. As to quaternary structure, part of the signal recognition particle protein translocation system, which is composed of SRP and FtsY. Archaeal SRP consists of a 7S RNA molecule of 300 nucleotides and two protein subunits: SRP54 and SRP19.

The protein localises to the cytoplasm. The enzyme catalyses GTP + H2O = GDP + phosphate + H(+). Involved in targeting and insertion of nascent membrane proteins into the cytoplasmic membrane. Binds to the hydrophobic signal sequence of the ribosome-nascent chain (RNC) as it emerges from the ribosomes. The SRP-RNC complex is then targeted to the cytoplasmic membrane where it interacts with the SRP receptor FtsY. This Methanothermobacter thermautotrophicus (strain ATCC 29096 / DSM 1053 / JCM 10044 / NBRC 100330 / Delta H) (Methanobacterium thermoautotrophicum) protein is Signal recognition particle 54 kDa protein.